The primary structure comprises 398 residues: Argininosuccinate synthase (398 aa).

Position 8 to 16 (8 to 16 (AYSGGLDTS)) interacts with ATP. Residue tyrosine 87 coordinates L-citrulline. Glycine 117 is an ATP binding site. Residues threonine 119, asparagine 123, and aspartate 124 each contribute to the L-aspartate site. L-citrulline is bound at residue asparagine 123. L-citrulline-binding residues include arginine 127, serine 175, glutamate 260, and tyrosine 272.

It belongs to the argininosuccinate synthase family. Type 1 subfamily. In terms of assembly, homotetramer.

It localises to the cytoplasm. It catalyses the reaction L-citrulline + L-aspartate + ATP = 2-(N(omega)-L-arginino)succinate + AMP + diphosphate + H(+). The protein operates within amino-acid biosynthesis; L-arginine biosynthesis; L-arginine from L-ornithine and carbamoyl phosphate: step 2/3. In Mycobacterium ulcerans (strain Agy99), this protein is Argininosuccinate synthase.